We begin with the raw amino-acid sequence, 125 residues long: Glycine cleavage system H protein (125 aa).

A Lipoyl-binding domain is found at 23 to 103 (TALVGITDFA…PYNAWLIKMK (81 aa)). An N6-lipoyllysine modification is found at K64.

Belongs to the GcvH family. In terms of assembly, the glycine cleavage system is composed of four proteins: P, T, L and H. It depends on (R)-lipoate as a cofactor.

Its function is as follows. The glycine cleavage system catalyzes the degradation of glycine. The H protein shuttles the methylamine group of glycine from the P protein to the T protein. The protein is Glycine cleavage system H protein of Chlorobium chlorochromatii (strain CaD3).